Reading from the N-terminus, the 216-residue chain is Neural cell adhesion molecule L1.2 (216 aa).

The Fibronectin type-III domain occupies 1–64 (EFFIHYLRKD…QTAGARVMEV (64 aa)). Over 1–73 (EFFIHYLRKD…VKSGFVTESW (73 aa)) the chain is Extracellular. N-linked (GlcNAc...) asparagine glycans are attached at residues Asn22 and Asn46. The helical transmembrane segment at 74 to 94 (FIGLISALVLLLLVLLILCFI) threads the bilayer. At 95-216 (KRSKGGKYSV…GLPNSAALLD (122 aa)) the chain is on the cytoplasmic side. 2 disordered regions span residues 127–149 (YRSLESDNEEKRTASQPSLCEDS) and 173–216 (DESL…ALLD). A compositionally biased stretch (basic and acidic residues) spans 128 to 139 (RSLESDNEEKRT).

The protein belongs to the immunoglobulin superfamily. L1/neurofascin/NgCAM family. Expressed in many postmitotic neurons in 16-36 hours embryos. Little or no expression in the olfactory placode, the anterior lateral line/acoustic ganglia complex, the posterior lateral line ganglion, late-developing hindbrain neurons and some Rohon-Beard cells in the spinal cord.

Its subcellular location is the cell membrane. It localises to the cell projection. It is found in the growth cone. Cell adhesion molecule with an important role in the development of the nervous system. Involved in neuron-neuron adhesion, neurite fasciculation, outgrowth of neurites, etc. Binds to axonin on neurons. The sequence is that of Neural cell adhesion molecule L1.2 (nadl1.2) from Danio rerio (Zebrafish).